A 273-amino-acid polypeptide reads, in one-letter code: Ribosomal RNA small subunit methyltransferase A (273 aa).

Asn18, Leu20, Gly45, Glu66, Asp91, and Asn113 together coordinate S-adenosyl-L-methionine.

It belongs to the class I-like SAM-binding methyltransferase superfamily. rRNA adenine N(6)-methyltransferase family. RsmA subfamily.

The protein localises to the cytoplasm. The enzyme catalyses adenosine(1518)/adenosine(1519) in 16S rRNA + 4 S-adenosyl-L-methionine = N(6)-dimethyladenosine(1518)/N(6)-dimethyladenosine(1519) in 16S rRNA + 4 S-adenosyl-L-homocysteine + 4 H(+). In terms of biological role, specifically dimethylates two adjacent adenosines (A1518 and A1519) in the loop of a conserved hairpin near the 3'-end of 16S rRNA in the 30S particle. May play a critical role in biogenesis of 30S subunits. The chain is Ribosomal RNA small subunit methyltransferase A from Klebsiella pneumoniae (strain 342).